Here is a 125-residue protein sequence, read N- to C-terminus: Small ribosomal subunit protein uS13 (125 aa).

The disordered stretch occupies residues 92–125 (RRSLPARGQRTRTNARTRKGKRKTVAGKKKAGKK).

Belongs to the universal ribosomal protein uS13 family. Part of the 30S ribosomal subunit. Forms a loose heterodimer with protein S19. Forms two bridges to the 50S subunit in the 70S ribosome.

In terms of biological role, located at the top of the head of the 30S subunit, it contacts several helices of the 16S rRNA. In the 70S ribosome it contacts the 23S rRNA (bridge B1a) and protein L5 of the 50S subunit (bridge B1b), connecting the 2 subunits; these bridges are implicated in subunit movement. Contacts the tRNAs in the A and P-sites. This Chlorobaculum parvum (strain DSM 263 / NCIMB 8327) (Chlorobium vibrioforme subsp. thiosulfatophilum) protein is Small ribosomal subunit protein uS13.